Reading from the N-terminus, the 316-residue chain is MANLKEIRDRIVSVKNTRKITEAMRLVAAAKVRRAQDQVLKSRPFADKLARVLENIQSRVQFEAVDSPLLSKRNVKKISLVCITADRGLCGGYNTNIIKKVEIRYAELIKQGYEPNLILVGKKAIGYFQNRKDRYVIKSTFKELEQVPTAIDSEGITNDVLAEFLSENSDRVEIIYTKFITLVSCAPVVQTLLPLDPQGIAEDNDEIFRLTTKNSKLLVEKSNIEKNDSDKLPSDIVFEQSPDQLLDSLLPLYLQNQILRALQESAASELACRMTAMNNASDNAKELASTLNLTYNKARQAAITQEILEVVGGSAV.

Belongs to the ATPase gamma chain family. As to quaternary structure, F-type ATPases have 2 components, CF(1) - the catalytic core - and CF(0) - the membrane proton channel. CF(1) has five subunits: alpha(3), beta(3), gamma(1), delta(1), epsilon(1). CF(0) has three main subunits: a, b and c.

Its subcellular location is the cellular thylakoid membrane. In terms of biological role, produces ATP from ADP in the presence of a proton gradient across the membrane. The gamma chain is believed to be important in regulating ATPase activity and the flow of protons through the CF(0) complex. This is ATP synthase gamma chain from Prochlorococcus marinus subsp. pastoris (strain CCMP1986 / NIES-2087 / MED4).